Consider the following 345-residue polypeptide: tRNA pseudouridine synthase B (345 aa).

Catalysis depends on Asp-39, which acts as the Nucleophile.

It belongs to the pseudouridine synthase TruB family. Type 1 subfamily.

It catalyses the reaction uridine(55) in tRNA = pseudouridine(55) in tRNA. Responsible for synthesis of pseudouridine from uracil-55 in the psi GC loop of transfer RNAs. This chain is tRNA pseudouridine synthase B, found in Rickettsia africae (strain ESF-5).